We begin with the raw amino-acid sequence, 253 residues long: Imidazole glycerol phosphate synthase subunit HisF (253 aa).

Active-site residues include Asp11 and Asp130.

This sequence belongs to the HisA/HisF family. In terms of assembly, heterodimer of HisH and HisF.

It is found in the cytoplasm. It carries out the reaction 5-[(5-phospho-1-deoxy-D-ribulos-1-ylimino)methylamino]-1-(5-phospho-beta-D-ribosyl)imidazole-4-carboxamide + L-glutamine = D-erythro-1-(imidazol-4-yl)glycerol 3-phosphate + 5-amino-1-(5-phospho-beta-D-ribosyl)imidazole-4-carboxamide + L-glutamate + H(+). The protein operates within amino-acid biosynthesis; L-histidine biosynthesis; L-histidine from 5-phospho-alpha-D-ribose 1-diphosphate: step 5/9. Functionally, IGPS catalyzes the conversion of PRFAR and glutamine to IGP, AICAR and glutamate. The HisF subunit catalyzes the cyclization activity that produces IGP and AICAR from PRFAR using the ammonia provided by the HisH subunit. This is Imidazole glycerol phosphate synthase subunit HisF from Clostridium botulinum (strain Kyoto / Type A2).